We begin with the raw amino-acid sequence, 658 residues long: Glycogen debranching enzyme (658 aa).

Aspartate 336 serves as the catalytic Nucleophile. Glutamate 371 serves as the catalytic Proton donor. Residues 459-486 (EANGEENRDGTNSNYSDNNGKEGLGGPL) form a disordered region.

The protein belongs to the glycosyl hydrolase 13 family.

The catalysed reaction is Hydrolysis of (1-&gt;6)-alpha-D-glucosidic linkages to branches with degrees of polymerization of three or four glucose residues in limit dextrin.. Its pathway is glycan degradation; glycogen degradation. Removes maltotriose and maltotetraose chains that are attached by 1,6-alpha-linkage to the limit dextrin main chain, generating a debranched limit dextrin. In Salmonella gallinarum (strain 287/91 / NCTC 13346), this protein is Glycogen debranching enzyme.